The chain runs to 177 residues: UPF0114 protein HPAG1_0183 (177 aa).

The next 4 helical transmembrane spans lie at 15-35, 54-74, 102-122, and 145-165; these read WLLA…GYVF, LVLS…VLMV, FNAL…IFLL, and PIFW…LAAV.

It belongs to the UPF0114 family.

The protein localises to the cell membrane. The protein is UPF0114 protein HPAG1_0183 of Helicobacter pylori (strain HPAG1).